Here is a 312-residue protein sequence, read N- to C-terminus: Malate dehydrogenase (312 aa).

NAD(+) contacts are provided by residues 7-13 and Asp34; that span reads GAAGGIG. 2 residues coordinate substrate: Arg81 and Arg87. NAD(+)-binding positions include Asn94 and 117–119; that span reads ITN. Asn119 and Arg153 together coordinate substrate. His177 serves as the catalytic Proton acceptor. Met227 is an NAD(+) binding site.

Belongs to the LDH/MDH superfamily. MDH type 1 family. Homodimer.

It carries out the reaction (S)-malate + NAD(+) = oxaloacetate + NADH + H(+). Functionally, catalyzes the reversible oxidation of malate to oxaloacetate. The chain is Malate dehydrogenase from Salmonella newport (strain SL254).